The chain runs to 358 residues: Phosphoribosylformylglycinamidine cyclo-ligase (358 aa).

This sequence belongs to the AIR synthase family.

It localises to the cytoplasm. It catalyses the reaction 2-formamido-N(1)-(5-O-phospho-beta-D-ribosyl)acetamidine + ATP = 5-amino-1-(5-phospho-beta-D-ribosyl)imidazole + ADP + phosphate + H(+). The protein operates within purine metabolism; IMP biosynthesis via de novo pathway; 5-amino-1-(5-phospho-D-ribosyl)imidazole from N(2)-formyl-N(1)-(5-phospho-D-ribosyl)glycinamide: step 2/2. The chain is Phosphoribosylformylglycinamidine cyclo-ligase from Nitrosococcus oceani (strain ATCC 19707 / BCRC 17464 / JCM 30415 / NCIMB 11848 / C-107).